The sequence spans 201 residues: Large ribosomal subunit protein bL25 (201 aa).

The protein belongs to the bacterial ribosomal protein bL25 family. CTC subfamily. Part of the 50S ribosomal subunit; part of the 5S rRNA/L5/L18/L25 subcomplex. Contacts the 5S rRNA. Binds to the 5S rRNA independently of L5 and L18.

Functionally, this is one of the proteins that binds to the 5S RNA in the ribosome where it forms part of the central protuberance. This is Large ribosomal subunit protein bL25 from Chlorobaculum parvum (strain DSM 263 / NCIMB 8327) (Chlorobium vibrioforme subsp. thiosulfatophilum).